The sequence spans 212 residues: Inactive ribonuclease-like protein 10 (212 aa).

The first 24 residues, methionine 1–glycine 24, serve as a signal peptide directing secretion. Residues asparagine 129 and asparagine 204 are each glycosylated (N-linked (GlcNAc...) asparagine).

This sequence belongs to the pancreatic ribonuclease family. Post-translationally, the N-terminus is blocked. Glycosylated. As to expression, male-specific expression in proximal caput of the epididymis.

It localises to the secreted. Secreted proximal epididymal protein required for post-testicular sperm maturation and male fertility. May be involved in sperm adhesion to the egg zona pellucida. Does not have ribonuclease activity. The sequence is that of Inactive ribonuclease-like protein 10 (Rnase10) from Rattus norvegicus (Rat).